Consider the following 374-residue polypeptide: MPRPIQAVIHGPALANNLQIARRHAPNSRVWAVVKANAYGHGIERVYEGLRQTDGFGLLDLDEAVRLRQLGWQGPVLLLEGFFKPEDLAIVEQYRLTTTVHCEEQLRMLELARLKGPTSVQLKINTGMSRLGFAPAAYRAAWERARAISGVGTIVHMTHFSDADGPRGIEHQLAAFERATQGLPGEASLSNSAATLWHPKAHRDWVRPGVIMYGASPTGVAADIDGTGLMPAMSLKSELIAIQDLQPGATIGYGSRFTVEHPMRIGVVACGYADGYPRHAPGWDGNHTPVLVDGVRTHIVGRVSMDMITVDLAGVPEARVGTPVTLWGEGLPIDDVAQASGTVGYELMCALAPRVPVLVEPVGTAEAGDLGKAA.

Catalysis depends on Lys35, which acts as the Proton acceptor; specific for D-alanine. Residue Lys35 is modified to N6-(pyridoxal phosphate)lysine. Position 130 (Arg130) interacts with substrate. Tyr253 functions as the Proton acceptor; specific for L-alanine in the catalytic mechanism. Residue Met305 coordinates substrate.

Belongs to the alanine racemase family. Pyridoxal 5'-phosphate serves as cofactor.

It catalyses the reaction L-alanine = D-alanine. The protein operates within amino-acid biosynthesis; D-alanine biosynthesis; D-alanine from L-alanine: step 1/1. Its function is as follows. Catalyzes the interconversion of L-alanine and D-alanine. May also act on other amino acids. The chain is Alanine racemase (alr) from Ralstonia pickettii (strain 12J).